The sequence spans 173 residues: Photosystem I assembly protein Ycf3 (173 aa).

3 TPR repeats span residues 35-68, 72-105, and 120-153; these read AFVY…EENP, SYIL…NPKM, and GEKA…APNN.

This sequence belongs to the Ycf3 family.

It is found in the cellular thylakoid membrane. In terms of biological role, essential for the assembly of the photosystem I (PSI) complex. May act as a chaperone-like factor to guide the assembly of the PSI subunits. The protein is Photosystem I assembly protein Ycf3 of Synechocystis sp. (strain ATCC 27184 / PCC 6803 / Kazusa).